The chain runs to 4753 residues: Dynein heavy chain domain-containing protein 1 (4753 aa).

2 coiled-coil regions span residues 826 to 858 and 936 to 991; these read IHAIAQCTQKLNEANEQYVELEERMEYVRALHE and KLQQ…LSEL. The tract at residues 2688-2766 is disordered; it reads HLGKDHQESE…SRGMKESISH (79 aa). Residues 2695–2712 show a composition bias toward acidic residues; the sequence is ESEEEEEEERVPEVESEG. Residues 2740-2751 are compositionally biased toward polar residues; that stretch reads RVSNSRDPSLTP. Coiled-coil stretches lie at residues 3125–3227, 3590–3651, and 4431–4460; these read LQQQ…MSKA, MRNQ…QGSK, and GAQLAERRLRQRLVQVNRRLESLQDLLTHV. A disordered region spans residues 3580 to 3657; sequence ALTEGRGKGL…QGSKPAYETQ (78 aa). The span at 3602-3615 shows a compositional bias: acidic residues; sequence KEEDDESEESNEAE. Residues 3616–3631 are compositionally biased toward basic and acidic residues; sequence DQTKEQKAEERKNEQE. Over residues 3632–3641 the composition is skewed to acidic residues; it reads KEQEENEEKE. The disordered stretch occupies residues 4669–4697; sequence ALQDSPSSQPSPLPPVSISTQAPGTSDLP.

This sequence belongs to the dynein heavy chain family. Expressed in spermatozoa (at protein level).

It localises to the cell projection. Its subcellular location is the cilium. It is found in the flagellum. Functionally, essential for the normal assembly and function of sperm flagella axonemes. The chain is Dynein heavy chain domain-containing protein 1 (DNHD1) from Homo sapiens (Human).